We begin with the raw amino-acid sequence, 525 residues long: Glutamyl-tRNA(Gln) amidotransferase subunit A, mitochondrial (525 aa).

Active-site charge relay system residues include Lys-76 and Ser-168. Ser-192 (acyl-ester intermediate) is an active-site residue.

Belongs to the amidase family. GatA subfamily. Subunit of the heterotrimeric GatCAB amidotransferase (AdT) complex, composed of A (QRSL1), B (GATB) and C (GATC) subunits.

It is found in the mitochondrion. It catalyses the reaction L-glutamyl-tRNA(Gln) + L-glutamine + ATP + H2O = L-glutaminyl-tRNA(Gln) + L-glutamate + ADP + phosphate + H(+). Functionally, allows the formation of correctly charged Gln-tRNA(Gln) through the transamidation of misacylated Glu-tRNA(Gln) in the mitochondria. The reaction takes place in the presence of glutamine and ATP through an activated gamma-phospho-Glu-tRNA(Gln). The sequence is that of Glutamyl-tRNA(Gln) amidotransferase subunit A, mitochondrial (Qrsl1) from Rattus norvegicus (Rat).